A 199-amino-acid polypeptide reads, in one-letter code: Imidazoleglycerol-phosphate dehydratase (199 aa).

It belongs to the imidazoleglycerol-phosphate dehydratase family.

The protein resides in the cytoplasm. It catalyses the reaction D-erythro-1-(imidazol-4-yl)glycerol 3-phosphate = 3-(imidazol-4-yl)-2-oxopropyl phosphate + H2O. It participates in amino-acid biosynthesis; L-histidine biosynthesis; L-histidine from 5-phospho-alpha-D-ribose 1-diphosphate: step 6/9. The chain is Imidazoleglycerol-phosphate dehydratase from Desulfotalea psychrophila (strain LSv54 / DSM 12343).